The primary structure comprises 411 residues: Glutamate dehydrogenase 1 (411 aa).

Residue lysine 102 is part of the active site.

This sequence belongs to the Glu/Leu/Phe/Val dehydrogenases family.

The catalysed reaction is L-glutamate + NAD(+) + H2O = 2-oxoglutarate + NH4(+) + NADH + H(+). The enzyme catalyses L-glutamate + NADP(+) + H2O = 2-oxoglutarate + NH4(+) + NADPH + H(+). In Arabidopsis thaliana (Mouse-ear cress), this protein is Glutamate dehydrogenase 1 (GDH1).